A 426-amino-acid chain; its full sequence is Glutamate-1-semialdehyde 2,1-aminomutase 2 (426 aa).

Lysine 265 carries the N6-(pyridoxal phosphate)lysine modification.

The protein belongs to the class-III pyridoxal-phosphate-dependent aminotransferase family. HemL subfamily. In terms of assembly, homodimer. Pyridoxal 5'-phosphate serves as cofactor.

It localises to the cytoplasm. It catalyses the reaction (S)-4-amino-5-oxopentanoate = 5-aminolevulinate. It functions in the pathway porphyrin-containing compound metabolism; protoporphyrin-IX biosynthesis; 5-aminolevulinate from L-glutamyl-tRNA(Glu): step 2/2. The chain is Glutamate-1-semialdehyde 2,1-aminomutase 2 from Lachnoclostridium phytofermentans (strain ATCC 700394 / DSM 18823 / ISDg) (Clostridium phytofermentans).